The sequence spans 266 residues: Short-chain dehydrogenase/reductase tropE (266 aa).

NADP(+) is bound by residues L18, D69, and N96. The active-site Proton donor is S147. Y181, K185, and T216 together coordinate NADP(+). The active-site Proton acceptor is the Y181. K185 acts as the Lowers pKa of active site Tyr in catalysis.

This sequence belongs to the short-chain dehydrogenases/reductases (SDR) family.

It participates in secondary metabolite biosynthesis. Functionally, short-chain dehydrogenase/reductase; part of the gene cluster that mediates the biosynthesis of the tropolone class of fungal maleic anhydrides. The pathway begins with the synthesis of 3-methylorcinaldehyde by the non-reducing polyketide synthase (PKS) tropA. 3-methylorcinaldehyde is the substrate for the FAD-dependent monooxygenase tropB to yield a dearomatized hydroxycyclohexadione. The 2-oxoglutarate-dependent dioxygenase tropC then performs the oxidative ring expansion to provide the first tropolone metabolite stipitaldehyde. Trop D converts stipitaldehyde into stipitacetal which is in turn converted to stipitalide by the short-chain dehydrogenase/reductase tropE. The next steps involve tropF, tropG, tropH, tropI and tropJ to form successive tropolone maleic anhydrides including stipitaldehydic, stipitatonic and stipitatic acids. The chain is Short-chain dehydrogenase/reductase tropE from Talaromyces stipitatus (strain ATCC 10500 / CBS 375.48 / QM 6759 / NRRL 1006) (Penicillium stipitatum).